Consider the following 207-residue polypeptide: Claudin-11 (207 aa).

Met-1 is a topological domain (cytoplasmic). The chain crosses the membrane as a helical span at residues 2–22 (VATCLQVVGFVTSFVGWIGII). The Extracellular portion of the chain corresponds to 23 to 82 (VTTSTNDWVVTCSYTIPTCRKMDELGSKGLWADCVMATGLYHCKPLVDILILPGYVQACR). Residues 83–103 (ALMIAASVLGLPAILLLLTVL) form a helical membrane-spanning segment. The Cytoplasmic portion of the chain corresponds to 104 to 122 (PCIRMGHEPGVAKYRRAQL). The chain crosses the membrane as a helical span at residues 123–143 (AGVLLILLALCAIVATIWFPV). Residues 144 to 157 (CAHREITIVSFGYS) are Extracellular-facing. A helical transmembrane segment spans residues 158–178 (LYAGWIGAVMCLVGGCVIVCC). Over 179-207 (SGDAQSFGENRFYYSSGSSSPTHAKSAHV) the chain is Cytoplasmic. Phosphoserine is present on residues Ser-193, Ser-194, Ser-197, and Ser-198.

This sequence belongs to the claudin family. Interacts with tetraspanin-3/TSPAN3. Interacts with OCLN.

The protein resides in the cell junction. Its subcellular location is the tight junction. The protein localises to the cell membrane. Functionally, plays a major role in tight junction-specific obliteration of the intercellular space, through calcium-independent cell-adhesion activity. In Mus musculus (Mouse), this protein is Claudin-11 (Cldn11).